Here is a 314-residue protein sequence, read N- to C-terminus: PDZ domain-containing protein GIPC2 (314 aa).

Over residues 1–12 (MPLGLRGKKKAA) the composition is skewed to basic residues. The tract at residues 1-36 (MPLGLRGKKKAAKSKETARLVEGERSGGSQGVPGPP) is disordered. The segment covering 13–25 (KSKETARLVEGER) has biased composition (basic and acidic residues). The region spanning 117-197 (EVNVYKSEDS…EELFTLQLIE (81 aa)) is the PDZ domain.

The protein belongs to the GIPC family. As to quaternary structure, probably interacts with SEMA5A.

It localises to the cytoplasm. The polypeptide is PDZ domain-containing protein GIPC2 (Gipc2) (Rattus norvegicus (Rat)).